The sequence spans 205 residues: High frequency lysogenization protein HflD homolog (205 aa).

The protein belongs to the HflD family.

It localises to the cytoplasm. It is found in the cell inner membrane. This chain is High frequency lysogenization protein HflD homolog, found in Shewanella sp. (strain MR-4).